The chain runs to 242 residues: UDP-2,3-diacylglucosamine hydrolase (242 aa).

Mn(2+) is bound by residues aspartate 8, histidine 10, aspartate 41, asparagine 79, and histidine 114. A substrate-binding site is contributed by 79–80 (NR). Positions 122, 164, 167, and 195 each coordinate substrate. Residues histidine 195 and histidine 197 each coordinate Mn(2+).

The protein belongs to the LpxH family. The cofactor is Mn(2+).

It localises to the cell inner membrane. The catalysed reaction is UDP-2-N,3-O-bis[(3R)-3-hydroxytetradecanoyl]-alpha-D-glucosamine + H2O = 2-N,3-O-bis[(3R)-3-hydroxytetradecanoyl]-alpha-D-glucosaminyl 1-phosphate + UMP + 2 H(+). It participates in glycolipid biosynthesis; lipid IV(A) biosynthesis; lipid IV(A) from (3R)-3-hydroxytetradecanoyl-[acyl-carrier-protein] and UDP-N-acetyl-alpha-D-glucosamine: step 4/6. Hydrolyzes the pyrophosphate bond of UDP-2,3-diacylglucosamine to yield 2,3-diacylglucosamine 1-phosphate (lipid X) and UMP by catalyzing the attack of water at the alpha-P atom. Involved in the biosynthesis of lipid A, a phosphorylated glycolipid that anchors the lipopolysaccharide to the outer membrane of the cell. This chain is UDP-2,3-diacylglucosamine hydrolase, found in Vibrio cholerae serotype O1 (strain ATCC 39315 / El Tor Inaba N16961).